Here is a 213-residue protein sequence, read N- to C-terminus: Uracil phosphoribosyltransferase (213 aa).

Residues Arg78, Arg103, and Asp130–Ser138 contribute to the 5-phospho-alpha-D-ribose 1-diphosphate site. Residues Ile193 and Gly198–Ala200 each bind uracil. Asp199 is a 5-phospho-alpha-D-ribose 1-diphosphate binding site.

It belongs to the UPRTase family. Mg(2+) is required as a cofactor.

The catalysed reaction is UMP + diphosphate = 5-phospho-alpha-D-ribose 1-diphosphate + uracil. The protein operates within pyrimidine metabolism; UMP biosynthesis via salvage pathway; UMP from uracil: step 1/1. With respect to regulation, allosterically activated by GTP. Functionally, catalyzes the conversion of uracil and 5-phospho-alpha-D-ribose 1-diphosphate (PRPP) to UMP and diphosphate. In Bordetella bronchiseptica (strain ATCC BAA-588 / NCTC 13252 / RB50) (Alcaligenes bronchisepticus), this protein is Uracil phosphoribosyltransferase.